The primary structure comprises 612 residues: MEFSRETRRLALQKMQERDLDLLIIGGGITGAGVALQAAASGLDTGLIEMQDFAQGTSSRSTKLVHGGLRYLKQFDVEVVSDTVSERAVVQQIAPHIPKPDPMLLPVYDEPGSTFSMFRLKVAMDLYDLLAGVSNMPAANKVLTKEEVLKREPDLKQEGLLGGGVYLDFRNNDARLVIENIKRANRDGALIASHVKAEDFLLDDNSKIIGVKARDLLSDQEIIIKAKLVINTTGPWSDEIRQFSHKGQPIHQMRPTKGVHLVVDRQKLPVSQPVYVDTGLNDGRMVFVLPREEKTYFGTTDTDYTGDLEHPQVTQEDVDYLLGVVNNRFPNANVTIDDIESSWAGLRPLLSGNSASDYNGGNSGKVSDDSFDHLVDTVKAYINHEDSREAVEKAIKQVETSTSEKELDPSAVSRGSSFDRDENGLFTLAGGKITDYRKMAEGALTGIIQILKEEFGKSFKLINSKTYPVSGGEINPANVDSEIEAYAQLGTLSGLSMDDARYLANLYGSNAPKVFALTRQLTAAEGLSLAETLSLHYAMDYEMALKPTDYFLRRTNHLLFMRDSLDALIDPVIKEMAKHFEWSDQERVAQEDDLRRVIADNDLSALKGQQEG.

Residue 21–49 participates in FAD binding; that stretch reads DLLIIGGGITGAGVALQAAASGLDTGLIE. Over residues 398–408 the composition is skewed to basic and acidic residues; the sequence is VETSTSEKELD. The segment at 398–418 is disordered; it reads VETSTSEKELDPSAVSRGSSF.

It belongs to the FAD-dependent glycerol-3-phosphate dehydrogenase family. The cofactor is FAD.

Its subcellular location is the cytoplasm. It catalyses the reaction sn-glycerol 3-phosphate + O2 = dihydroxyacetone phosphate + H2O2. This chain is Alpha-glycerophosphate oxidase (glpO), found in Streptococcus pyogenes serotype M18 (strain MGAS8232).